Reading from the N-terminus, the 277-residue chain is Bis(5'-nucleosyl)-tetraphosphatase, symmetrical (277 aa).

It belongs to the Ap4A hydrolase family.

It carries out the reaction P(1),P(4)-bis(5'-adenosyl) tetraphosphate + H2O = 2 ADP + 2 H(+). Its function is as follows. Hydrolyzes diadenosine 5',5'''-P1,P4-tetraphosphate to yield ADP. In Azotobacter vinelandii (strain DJ / ATCC BAA-1303), this protein is Bis(5'-nucleosyl)-tetraphosphatase, symmetrical.